Here is a 434-residue protein sequence, read N- to C-terminus: Putative D-alanyl-D-alanine carboxypeptidase (434 aa).

The helical; Signal-anchor transmembrane segment at 7 to 25 (YLSLLAVSCSVSAAKYPVL) threads the bilayer.

The protein belongs to the peptidase S12 family. YfeW subfamily.

It is found in the cell inner membrane. The catalysed reaction is Preferential cleavage: (Ac)2-L-Lys-D-Ala-|-D-Ala. Also transpeptidation of peptidyl-alanyl moieties that are N-acyl substituents of D-alanine.. The polypeptide is Putative D-alanyl-D-alanine carboxypeptidase (Escherichia coli O157:H7).